The sequence spans 267 residues: Cell division protein FtsQ (267 aa).

Over 1–32 (MRKKTSSNKKKQTKKTNNISLRRKLGLMYKKA) the chain is Cytoplasmic. A helical transmembrane segment spans residues 33 to 53 (ILGLKIALIIFVCLFVFTKYF). Over 54-267 (AGIKTYLTTN…DKNKYYIEKY (214 aa)) the chain is Periplasmic. Residues 73 to 141 (FKLENVIIEG…NTVYIKLFER (69 aa)) form the POTRA domain.

Belongs to the FtsQ/DivIB family. FtsQ subfamily.

The protein resides in the cell inner membrane. Essential cell division protein. The chain is Cell division protein FtsQ from Rickettsia conorii (strain ATCC VR-613 / Malish 7).